The following is a 331-amino-acid chain: CRISPR-associated endonuclease Cas1 (331 aa).

3 residues coordinate Mn(2+): glutamate 166, histidine 228, and aspartate 243.

This sequence belongs to the CRISPR-associated endonuclease Cas1 family. As to quaternary structure, homodimer, forms a heterotetramer with a Cas2 homodimer. Mg(2+) serves as cofactor. It depends on Mn(2+) as a cofactor.

Its function is as follows. CRISPR (clustered regularly interspaced short palindromic repeat), is an adaptive immune system that provides protection against mobile genetic elements (viruses, transposable elements and conjugative plasmids). CRISPR clusters contain spacers, sequences complementary to antecedent mobile elements, and target invading nucleic acids. CRISPR clusters are transcribed and processed into CRISPR RNA (crRNA). Acts as a dsDNA endonuclease. Involved in the integration of spacer DNA into the CRISPR cassette. The chain is CRISPR-associated endonuclease Cas1 from Hyperthermus butylicus (strain DSM 5456 / JCM 9403 / PLM1-5).